A 548-amino-acid chain; its full sequence is Beta-caryophyllene synthase (548 aa).

Residues R268, D305, D309, R446, and D449 each coordinate (2E,6E)-farnesyl diphosphate. Residues D305 and D309 each coordinate Mg(2+). Positions 305 to 309 (DDIYD) match the DDXXD motif motif. Residues D449 and E457 each coordinate Mg(2+).

This sequence belongs to the terpene synthase family. Requires Mg(2+) as cofactor.

It carries out the reaction (2E,6E)-farnesyl diphosphate = (-)-(E)-beta-caryophyllene + diphosphate. It participates in secondary metabolite biosynthesis; terpenoid biosynthesis. Its function is as follows. Sesquiterpene synthase that catalyzes the formation of sesquiterpenes and sesquiterpenoid alcohols. Converts farnesyl diphosphate (FPP) to beta-caryophyllene. Can use geranyl diphosphate (GPP) to produce myrcene, limonene and camphene. The polypeptide is Beta-caryophyllene synthase (Lavandula angustifolia (Lavender)).